We begin with the raw amino-acid sequence, 372 residues long: Cytochrome b (372 aa).

Helical transmembrane passes span 25 to 45 (FGSM…FLSM), 69 to 90 (WMMQ…YIHV), 105 to 125 (WLSG…GYVL), and 170 to 190 (FFAL…LHIM). 2 residues coordinate heme b: His75 and His89. His174 and His188 together coordinate heme b. His193 is an a ubiquinone binding site. A run of 4 helical transmembrane segments spans residues 218–238 (YKDL…ISFI), 280–300 (LGGA…PFTH), 312–332 (FMQL…WTAT), and 339–358 (YTMI…MSNP).

The protein belongs to the cytochrome b family. As to quaternary structure, the cytochrome bc1 complex contains 3 respiratory subunits (MT-CYB, CYC1 and UQCRFS1), 2 core proteins (UQCRC1 and UQCRC2) and probably 6 low-molecular weight proteins. Requires heme b as cofactor.

It is found in the mitochondrion inner membrane. Component of the ubiquinol-cytochrome c reductase complex (complex III or cytochrome b-c1 complex) that is part of the mitochondrial respiratory chain. The b-c1 complex mediates electron transfer from ubiquinol to cytochrome c. Contributes to the generation of a proton gradient across the mitochondrial membrane that is then used for ATP synthesis. The polypeptide is Cytochrome b (MT-CYB) (Acrantophis madagascariensis (Madagascar ground boa)).